Consider the following 210-residue polypeptide: Orotate phosphoribosyltransferase (210 aa).

5-phospho-alpha-D-ribose 1-diphosphate contacts are provided by residues arginine 96, lysine 100, histidine 102, and glutamate 122–serine 130. Serine 126 contacts orotate.

It belongs to the purine/pyrimidine phosphoribosyltransferase family. PyrE subfamily. As to quaternary structure, homodimer. Mg(2+) is required as a cofactor.

The catalysed reaction is orotidine 5'-phosphate + diphosphate = orotate + 5-phospho-alpha-D-ribose 1-diphosphate. The protein operates within pyrimidine metabolism; UMP biosynthesis via de novo pathway; UMP from orotate: step 1/2. Functionally, catalyzes the transfer of a ribosyl phosphate group from 5-phosphoribose 1-diphosphate to orotate, leading to the formation of orotidine monophosphate (OMP). The sequence is that of Orotate phosphoribosyltransferase from Streptococcus pneumoniae (strain ATCC BAA-255 / R6).